Consider the following 60-residue polypeptide: DNA-directed RNA polymerase subunit Rpo6 (60 aa).

It belongs to the archaeal Rpo6/eukaryotic RPB6 RNA polymerase subunit family. In terms of assembly, part of the RNA polymerase complex.

It is found in the cytoplasm. It catalyses the reaction RNA(n) + a ribonucleoside 5'-triphosphate = RNA(n+1) + diphosphate. Its function is as follows. DNA-dependent RNA polymerase (RNAP) catalyzes the transcription of DNA into RNA using the four ribonucleoside triphosphates as substrates. The polypeptide is DNA-directed RNA polymerase subunit Rpo6 (Picrophilus torridus (strain ATCC 700027 / DSM 9790 / JCM 10055 / NBRC 100828 / KAW 2/3)).